Here is a 570-residue protein sequence, read N- to C-terminus: Grayanic acid biosynthesis cluster cytochrome P450 monooxygenase (570 aa).

The helical transmembrane segment at 9–29 (ILTIFWLPIAAAXLYGAGLAI) threads the bilayer. Residue Asn-191 is glycosylated (N-linked (GlcNAc...) asparagine). Cys-510 is a binding site for heme.

The protein belongs to the cytochrome P450 family. Heme is required as a cofactor.

The protein localises to the membrane. It participates in secondary metabolite biosynthesis. Functionally, non-reducing polyketide synthase; part of the gene cluster that mediates the biosynthesis of orcinol depsidone grayanic acid (GRA), the only major secondary metabolite known in C.grayi. The first step consists in the ring and depside synthesis by PKS16 leading to 4-O-demethylsphaerophorin, involving different orcinol-like rings, one with acetyl CoA and the other with octanoyl CoA as the starter. Further depsidone formation by the GRA cluster-specific cytochrome P450 leads to 4-O-demethylgrayanic acid. Finally, the cluster specific O-methyltransferase probably converts the 4-O-demethylgrayanic acid into grayanic acid. This chain is Grayanic acid biosynthesis cluster cytochrome P450 monooxygenase, found in Cladonia grayi (Gray's cup lichen).